The following is a 540-amino-acid chain: SNW/SKI-interacting protein B (540 aa).

Disordered stretches follow at residues 1–106, 215–273, 351–402, and 502–526; these read MVLR…SLTV, GETQ…NPKG, GAAP…RDRD, and ASVAAGKRERPVEFDGPEMEEDPFH. Basic and acidic residues-rich tracts occupy residues 16-29 and 83-94; these read PHDHTEDEWFKERY and MGRRGGDGDGEQ. An SNW region spans residues 189–353; the sequence is PEFIKYTPAR…KARAEMLGAA (165 aa). Residues 236-251 are compositionally biased toward pro residues; sequence AGSPPVPVLRSPPRPP. Basic and acidic residues predominate over residues 359–382; that stretch reads ERSKAAAERDAIREERRRERRLEA. The span at 383–393 shows a compositional bias: low complexity; the sequence is RAAAAAASKKS.

This sequence belongs to the SNW family.

Its subcellular location is the nucleus. This Oryza sativa subsp. japonica (Rice) protein is SNW/SKI-interacting protein B.